Consider the following 680-residue polypeptide: DNA-directed RNA polymerase subunit beta' (680 aa).

The Zn(2+) site is built by C69, C71, C87, and C90. D489, D491, and D493 together coordinate Mg(2+).

It belongs to the RNA polymerase beta' chain family. RpoC1 subfamily. In terms of assembly, in plastids the minimal PEP RNA polymerase catalytic core is composed of four subunits: alpha, beta, beta', and beta''. When a (nuclear-encoded) sigma factor is associated with the core the holoenzyme is formed, which can initiate transcription. Mg(2+) serves as cofactor. The cofactor is Zn(2+).

It is found in the plastid. It localises to the chloroplast. It carries out the reaction RNA(n) + a ribonucleoside 5'-triphosphate = RNA(n+1) + diphosphate. In terms of biological role, DNA-dependent RNA polymerase catalyzes the transcription of DNA into RNA using the four ribonucleoside triphosphates as substrates. The protein is DNA-directed RNA polymerase subunit beta' of Nandina domestica (Heavenly bamboo).